A 415-amino-acid polypeptide reads, in one-letter code: Esterase FrsA (415 aa).

Belongs to the FrsA family.

The catalysed reaction is a carboxylic ester + H2O = an alcohol + a carboxylate + H(+). Its function is as follows. Catalyzes the hydrolysis of esters. This chain is Esterase FrsA, found in Serratia proteamaculans (strain 568).